Consider the following 492-residue polypeptide: Glutamyl-tRNA(Gln) amidotransferase subunit A (492 aa).

Residues Lys80 and Ser155 each act as charge relay system in the active site. Catalysis depends on Ser179, which acts as the Acyl-ester intermediate.

It belongs to the amidase family. GatA subfamily. Heterotrimer of A, B and C subunits.

It carries out the reaction L-glutamyl-tRNA(Gln) + L-glutamine + ATP + H2O = L-glutaminyl-tRNA(Gln) + L-glutamate + ADP + phosphate + H(+). Its function is as follows. Allows the formation of correctly charged Gln-tRNA(Gln) through the transamidation of misacylated Glu-tRNA(Gln) in organisms which lack glutaminyl-tRNA synthetase. The reaction takes place in the presence of glutamine and ATP through an activated gamma-phospho-Glu-tRNA(Gln). This Mycobacteroides abscessus (strain ATCC 19977 / DSM 44196 / CCUG 20993 / CIP 104536 / JCM 13569 / NCTC 13031 / TMC 1543 / L948) (Mycobacterium abscessus) protein is Glutamyl-tRNA(Gln) amidotransferase subunit A.